A 251-amino-acid polypeptide reads, in one-letter code: Probable transcriptional regulatory protein BLA_1344 (251 aa).

This sequence belongs to the TACO1 family.

Its subcellular location is the cytoplasm. In Bifidobacterium animalis subsp. lactis (strain AD011), this protein is Probable transcriptional regulatory protein BLA_1344.